The following is a 317-amino-acid chain: Enoyl-CoA delta isomerase 3, peroxisomal (317 aa).

An ACB domain is found at 1–46; that stretch reads MPKPGVFNFVNKATWDARNALGSLPKETARKNYVDLVSSLSSSSEA. The disordered stretch occupies residues 40-60; sequence LSSSSEAPSQGKRGADEKARE. 120–124 is a substrate binding site; the sequence is SGNDL. The Microbody targeting signal signature appears at 315-317; it reads AKL.

Belongs to the enoyl-CoA hydratase/isomerase family. In terms of tissue distribution, expressed at high levels in the kidney. Also detected at very low levels in the duodenum, jejunum, ileum, heart, liver, lung, and brown adipose tissue (at protein level). In the kidney, expression seems to be localized mainly to the proximal tubule.

The protein localises to the peroxisome. The catalysed reaction is a (3Z)-enoyl-CoA = a 4-saturated (2E)-enoyl-CoA. It catalyses the reaction a (3E)-enoyl-CoA = a 4-saturated (2E)-enoyl-CoA. It carries out the reaction (3E)-nonenoyl-CoA = (2E)-nonenoyl-CoA. Functionally, catalyzes the isomerization of trans-3-nonenoyl-CoA into trans-2-nonenoyl-CoA. May also have activity towards other enoyl-CoA species. This is Enoyl-CoA delta isomerase 3, peroxisomal from Mus musculus (Mouse).